A 488-amino-acid polypeptide reads, in one-letter code: ATP synthase subunit beta (488 aa).

Residue 164–171 participates in ATP binding; sequence GGAGVGKT.

The protein belongs to the ATPase alpha/beta chains family. As to quaternary structure, F-type ATPases have 2 components, CF(1) - the catalytic core - and CF(0) - the membrane proton channel. CF(1) has five subunits: alpha(3), beta(3), gamma(1), delta(1), epsilon(1). CF(0) has four main subunits: a(1), b(1), b'(1) and c(9-12).

It is found in the cellular thylakoid membrane. It catalyses the reaction ATP + H2O + 4 H(+)(in) = ADP + phosphate + 5 H(+)(out). Produces ATP from ADP in the presence of a proton gradient across the membrane. The catalytic sites are hosted primarily by the beta subunits. This is ATP synthase subunit beta from Prochlorococcus marinus (strain NATL2A).